A 303-amino-acid chain; its full sequence is Protein translocase subunit SecF (303 aa).

A run of 6 helical transmembrane segments spans residues 28–48 (SIIL…NFGI), 140–160 (IEAG…YIWV), 164–184 (WYFG…ALGF), 194–214 (LSTI…SVVI), 246–266 (ILTV…GGEA), and 272–292 (VLVF…SAPI).

Belongs to the SecD/SecF family. SecF subfamily. Forms a complex with SecD. Part of the essential Sec protein translocation apparatus which comprises SecA, SecYEG and auxiliary proteins SecDF-YajC and YidC.

It localises to the cell inner membrane. In terms of biological role, part of the Sec protein translocase complex. Interacts with the SecYEG preprotein conducting channel. SecDF uses the proton motive force (PMF) to complete protein translocation after the ATP-dependent function of SecA. The chain is Protein translocase subunit SecF from Rickettsia bellii (strain OSU 85-389).